The following is a 200-amino-acid chain: Orotate phosphoribosyltransferase (200 aa).

Residues arginine 95, lysine 99, histidine 101, and 121–129 (DDVATTGGS) contribute to the 5-phospho-alpha-D-ribose 1-diphosphate site. Threonine 125 and arginine 153 together coordinate orotate.

Belongs to the purine/pyrimidine phosphoribosyltransferase family. PyrE subfamily. In terms of assembly, homodimer. Requires Mg(2+) as cofactor.

The catalysed reaction is orotidine 5'-phosphate + diphosphate = orotate + 5-phospho-alpha-D-ribose 1-diphosphate. Its pathway is pyrimidine metabolism; UMP biosynthesis via de novo pathway; UMP from orotate: step 1/2. In terms of biological role, catalyzes the transfer of a ribosyl phosphate group from 5-phosphoribose 1-diphosphate to orotate, leading to the formation of orotidine monophosphate (OMP). This chain is Orotate phosphoribosyltransferase, found in Cenarchaeum symbiosum (strain A).